Reading from the N-terminus, the 713-residue chain is Cyclomaltodextrin glucanotransferase (713 aa).

The signal sequence occupies residues 1 to 27; that stretch reads MKKISKLTTALALSLSLALSLLGPAHA. An A1 region spans residues 28 to 165; it reads APDTSVSNKQ…NIKVIIDFAP (138 aa). Positions 54, 56, 59, and 60 each coordinate Ca(2+). Residues cysteine 70 and cysteine 77 are joined by a disulfide bond. The Ca(2+) site is built by glycine 78 and aspartate 80. Substrate is bound at residue 127–128; sequence YW. Position 166 (asparagine 166) interacts with Ca(2+). Residues 166-229 are b; the sequence is NHTSPASLDQ…NLYDLADLNH (64 aa). Substrate is bound at residue histidine 167. Ca(2+) is bound at residue isoleucine 217. Position 220–223 (220–223) interacts with substrate; the sequence is NLYD. Aspartate 226 contacts Ca(2+). Positions 230-433 are A2; that stretch reads NNSTVDTYLK…LRKSNPAIAY (204 aa). Arginine 254 contributes to the substrate binding site. Residue aspartate 256 is the Nucleophile of the active site. 259-260 serves as a coordination point for substrate; that stretch reads KH. Histidine 260 contributes to the Ca(2+) binding site. Residue glutamate 284 is the Proton donor of the active site. Substrate is bound by residues histidine 354, aspartate 398, and arginine 402. The tract at residues 434 to 522 is c; sequence GTTQERWINN…GTAVWQYTTA (89 aa). The tract at residues 523-609 is d; that stretch reads VTAPTIGHVG…SNVHDNFEVL (87 aa). The 82-residue stretch at 526–607 folds into the IPT/TIG domain; it reads PTIGHVGPMM…TSSNVHDNFE (82 aa). In terms of domain architecture, CBM20 spans 608–713; the sequence is VLSGDQVSVR…TATINVNWQP (106 aa). An e region spans residues 610–713; the sequence is SGDQVSVRFV…TATINVNWQP (104 aa).

This sequence belongs to the glycosyl hydrolase 13 family. In terms of assembly, monomer. Requires Ca(2+) as cofactor.

The protein localises to the secreted. It catalyses the reaction Cyclizes part of a (1-&gt;4)-alpha-D-glucan chain by formation of a (1-&gt;4)-alpha-D-glucosidic bond.. The protein is Cyclomaltodextrin glucanotransferase (cgt) of Bacillus sp. (strain 17-1).